The primary structure comprises 389 residues: GDP-fucose protein O-fucosyltransferase 1 (389 aa).

The signal sequence occupies residues 1-21 (MRVSKVLTLASFISVCSYSEA). A glycan (N-linked (GlcNAc...) asparagine) is linked at Asn-24. Residues Cys-35 and Cys-37 are joined by a disulfide bond. A substrate-binding site is contributed by 40–43 (RFGN). Cys-119 and Cys-135 are joined by a disulfide. Residue 238-240 (HLR) participates in substrate binding. 2 cysteine pairs are disulfide-bonded: Cys-249-Cys-281 and Cys-266-Cys-353. Position 356-357 (356-357 (TF)) interacts with substrate.

Belongs to the glycosyltransferase 65 family. Monomer.

Its subcellular location is the endoplasmic reticulum. The catalysed reaction is L-seryl-[protein] + GDP-beta-L-fucose = 3-O-(alpha-L-fucosyl)-L-seryl-[protein] + GDP + H(+). It catalyses the reaction L-threonyl-[protein] + GDP-beta-L-fucose = 3-O-(alpha-L-fucosyl)-L-threonyl-[protein] + GDP + H(+). Its pathway is protein modification; protein glycosylation. Its function is as follows. Catalyzes the reaction that attaches fucose through an O-glycosidic linkage to a conserved serine or threonine residue found in the consensus sequence C2-X(4,5)-[S/T]-C3 of EGF domains, where C2 and C3 are the second and third conserved cysteines. Specifically uses GDP-fucose as donor substrate and proper disulfide pairing of the substrate EGF domains is required for fucose transfer. This Caenorhabditis elegans protein is GDP-fucose protein O-fucosyltransferase 1.